A 412-amino-acid chain; its full sequence is Imidazolonepropionase (412 aa).

Fe(3+) is bound by residues histidine 76 and histidine 78. Zn(2+) contacts are provided by histidine 76 and histidine 78. Positions 85, 148, and 181 each coordinate 4-imidazolone-5-propanoate. N-formimidoyl-L-glutamate is bound at residue tyrosine 148. Histidine 242 serves as a coordination point for Fe(3+). Histidine 242 serves as a coordination point for Zn(2+). Glutamate 245 contributes to the 4-imidazolone-5-propanoate binding site. Aspartate 317 is a binding site for Fe(3+). Aspartate 317 serves as a coordination point for Zn(2+). 2 residues coordinate N-formimidoyl-L-glutamate: asparagine 319 and glycine 321. Serine 322 provides a ligand contact to 4-imidazolone-5-propanoate.

It belongs to the metallo-dependent hydrolases superfamily. HutI family. It depends on Zn(2+) as a cofactor. The cofactor is Fe(3+).

It is found in the cytoplasm. It carries out the reaction 4-imidazolone-5-propanoate + H2O = N-formimidoyl-L-glutamate. It participates in amino-acid degradation; L-histidine degradation into L-glutamate; N-formimidoyl-L-glutamate from L-histidine: step 3/3. Its function is as follows. Catalyzes the hydrolytic cleavage of the carbon-nitrogen bond in imidazolone-5-propanoate to yield N-formimidoyl-L-glutamate. It is the third step in the universal histidine degradation pathway. The protein is Imidazolonepropionase of Staphylococcus aureus (strain Mu50 / ATCC 700699).